A 388-amino-acid chain; its full sequence is Fibrinogen- and Ig-binding protein (388 aa).

The first 41 residues, 1–41 (MSKTNPNKLYSLRKLKTGTASVAVDLTVLGTGLANTTDVKA), serve as a signal peptide directing secretion. D repeat units lie at residues 288-293 (EKLEAE), 294-299 (AKALKE), 302-307 (AKQAEE), and 309-314 (AKLKAD). The segment at 308-362 (LAKLKADKASGAQKPDTKPGNKEVPTRPSQTRTNTNKAPMAQTKRQLPSTGEETT) is disordered. Basic and acidic residues predominate over residues 322 to 332 (PDTKPGNKEVP). The segment covering 334–362 (RPSQTRTNTNKAPMAQTKRQLPSTGEETT) has biased composition (polar residues). The LPXTG sorting signal motif lies at 354 to 358 (LPSTG). Thr-357 bears the Pentaglycyl murein peptidoglycan amidated threonine mark. A propeptide spans 358–388 (GEETTNPFFTAAALTVIASAGVLALKRKEEN) (removed by sortase).

The protein localises to the secreted. The protein resides in the cell wall. Its function is as follows. Binds IgG molecules of the Ig1, Ig2 and Ig4 subclasses, and also binds fibrinogen. The polypeptide is Fibrinogen- and Ig-binding protein (mrp4) (Streptococcus pyogenes).